Consider the following 433-residue polypeptide: Probable non-inhibitory serpin-Z5 (433 aa).

Residues 1–12 (MEPKEKKQKLDT) are compositionally biased toward basic and acidic residues. Residues 1-43 (MEPKEKKQKLDTSEVASPSLSKTHLKKKKTKKQKIRKSQEITS) are disordered. A compositionally biased stretch (basic residues) spans 23-36 (THLKKKKTKKQKIR). Positions 380–404 (GTEAVTFTAFRSAYLGCALVKPIDF) are RCL.

This sequence belongs to the serpin family. In terms of tissue distribution, weakly expressed during seedling development.

The chain is Probable non-inhibitory serpin-Z5 from Arabidopsis thaliana (Mouse-ear cress).